Consider the following 383-residue polypeptide: Heme A synthase (383 aa).

Helical transmembrane passes span Val-38–Leu-58, Val-127–Pro-147, Leu-153–Ser-173, Leu-187–Val-207, Ala-230–Ile-250, Leu-287–Trp-307, Ala-321–Leu-341, and Ala-344–Leu-364. His-292 provides a ligand contact to heme. His-352 contributes to the heme binding site.

The protein belongs to the COX15/CtaA family. Type 2 subfamily. In terms of assembly, interacts with CtaB. The cofactor is heme b.

The protein localises to the cell membrane. The enzyme catalyses Fe(II)-heme o + 2 A + H2O = Fe(II)-heme a + 2 AH2. It functions in the pathway porphyrin-containing compound metabolism; heme A biosynthesis; heme A from heme O: step 1/1. Functionally, catalyzes the conversion of heme O to heme A by two successive hydroxylations of the methyl group at C8. The first hydroxylation forms heme I, the second hydroxylation results in an unstable dihydroxymethyl group, which spontaneously dehydrates, resulting in the formyl group of heme A. The chain is Heme A synthase from Dinoroseobacter shibae (strain DSM 16493 / NCIMB 14021 / DFL 12).